The following is an 86-amino-acid chain: Small ribosomal subunit protein bS16 (86 aa).

It belongs to the bacterial ribosomal protein bS16 family.

The sequence is that of Small ribosomal subunit protein bS16 from Xylella fastidiosa (strain M23).